A 319-amino-acid chain; its full sequence is Ribonuclease Z (319 aa).

Histidine 62, histidine 64, aspartate 66, histidine 67, histidine 139, aspartate 209, and histidine 268 together coordinate Zn(2+). Residue aspartate 66 is the Proton acceptor of the active site.

This sequence belongs to the RNase Z family. Homodimer. The cofactor is Zn(2+).

The catalysed reaction is Endonucleolytic cleavage of RNA, removing extra 3' nucleotides from tRNA precursor, generating 3' termini of tRNAs. A 3'-hydroxy group is left at the tRNA terminus and a 5'-phosphoryl group is left at the trailer molecule.. Zinc phosphodiesterase, which displays some tRNA 3'-processing endonuclease activity. Probably involved in tRNA maturation, by removing a 3'-trailer from precursor tRNA. The polypeptide is Ribonuclease Z (Pseudomonas putida (strain ATCC 47054 / DSM 6125 / CFBP 8728 / NCIMB 11950 / KT2440)).